The chain runs to 151 residues: MTGLERQLTEMLEAPVVAAGYELVGLEFVRAGQHSTLRIFIDHENGITVEDCAEVSRQVSAVLDVEDPISVVYNLEVSSPGLERPLFKAAHYEQFIGHEVSIVLKMAVGNRRKWKGVIQSIDGETVAVMVDGQEEHFALSNISKANLIPKF.

The protein belongs to the RimP family.

It is found in the cytoplasm. Functionally, required for maturation of 30S ribosomal subunits. The sequence is that of Ribosome maturation factor RimP from Vibrio cholerae serotype O1 (strain ATCC 39541 / Classical Ogawa 395 / O395).